A 377-amino-acid chain; its full sequence is MGSFEIPEKHTALLQGEGGSLVIARDVPLPTLGPGHLLVKTAAVALNPCDFKTPAAFPNPGYYNGCDFAGTVVALGSDNIRDGGPWKIGDRIFGAIHGANPSDWDSGSHAEYVKAVSVFSYRIPDWMTFEEAAGLSPCCIATMGVSLFKALELPGTFEEPATKPLDVLIYGGSSSVGSLGIQMVKLTGHRLGHRCITTCSPKNFDLVKSYGADEVFDYKSPTCAQDIRKATRNCLKYAVDPFGEVKTMAICTEAIGRAGGRYSALEKFQEDVCDRKTVKRELTMGAIIIGHGLDLGGRYTRPHSPEMRAWGIEWYKSIQRLVDARKFKPHPIRVLKGGFEDMLEGLAMLKRREISAEKLVVSLDPAVSGLTADSTAR.

Residues 18–361 (GGSLVIARDV…REISAEKLVV (344 aa)) form an enoyl reductase (ER) domain region. 49 to 52 (CDFK) serves as a coordination point for NADP(+). 137 to 144 (PCCIATMG) contributes to the substrate binding site. NADP(+) contacts are provided by residues 173–176 (SSSV), 200–203 (SPKN), Tyr218, 265–266 (LE), and Thr283. 285–289 (GAIII) is a binding site for substrate. 354 to 355 (IS) provides a ligand contact to NADP(+).

The protein belongs to the zinc-containing alcohol dehydrogenase family. The cofactor is heme.

It participates in secondary metabolite biosynthesis. Functionally, enoyl reductase; part of the gene cluster that mediates the biosynthesis of chaetoglobosin A which has a unique inhibitory activity against actin polymerization in mammalian cells. Chaetoglobosin A and its intermediates are involved in the morphological differentiation of C.globosum. The first step of the pathway is the synthesis of prochaetoglobosin I via condensation of one acetyl-CoA, 8 malonyl-CoA, and a L-tryptophan molecule by the PKS-NRPS hybrid synthetase cheA, followed by reduction of backbone double bond to install desired geometry by the enoyl reductase cheB. Further multiple oxidation steps performed by the cytochrome P450 monooxygenases cheE and cheG, as well as by the FAD-linked oxidoreductase cheF, lead to the formation of chaetoglobosin A. Depending on the order of action of these reductases, distinct intermediates can be identified. Within the pathway, the cytochrome P450 monooxygenase cheE catalyzes a stereospecific epoxidation on prochaetoglobosin I, cytoglobosin D, and chaetoglobosin J intermediates. The FAD-linked oxidoreductase cheF performs dehydrogenation of the C-20 hydroxyl groups in the 20-dihyrochaetoglobosin A and cytoglobosin D intermediates. Finally, the cytochrome P450 monooxygenase cheG can catalyze the stereospecific dihydroxylation of prochaetoglobosin I and prochaetoglobosin IV at C-19 and C-20, respectively. The Diels-Alderase cheD may play a role in the post-PKS-NRPS biosynthetic steps catalyzing Diels-Alder cyclization. The sequence is that of Enoyl reductase cheB from Chaetomium globosum (strain ATCC 6205 / CBS 148.51 / DSM 1962 / NBRC 6347 / NRRL 1970) (Soil fungus).